We begin with the raw amino-acid sequence, 158 residues long: 2-C-methyl-D-erythritol 2,4-cyclodiphosphate synthase (158 aa).

A divalent metal cation-binding residues include Asp-9 and His-11. 4-CDP-2-C-methyl-D-erythritol 2-phosphate-binding positions include 9 to 11 (DVH) and 35 to 36 (HS). Position 43 (His-43) interacts with a divalent metal cation. 4-CDP-2-C-methyl-D-erythritol 2-phosphate contacts are provided by residues 57–59 (DIG), 62–66 (FPDTD), 101–107 (AQKPKML), 133–136 (TTTE), Phe-140, and Arg-143.

The protein belongs to the IspF family. As to quaternary structure, homotrimer. A divalent metal cation serves as cofactor.

It catalyses the reaction 4-CDP-2-C-methyl-D-erythritol 2-phosphate = 2-C-methyl-D-erythritol 2,4-cyclic diphosphate + CMP. It functions in the pathway isoprenoid biosynthesis; isopentenyl diphosphate biosynthesis via DXP pathway; isopentenyl diphosphate from 1-deoxy-D-xylulose 5-phosphate: step 4/6. Functionally, involved in the biosynthesis of isopentenyl diphosphate (IPP) and dimethylallyl diphosphate (DMAPP), two major building blocks of isoprenoid compounds. Catalyzes the conversion of 4-diphosphocytidyl-2-C-methyl-D-erythritol 2-phosphate (CDP-ME2P) to 2-C-methyl-D-erythritol 2,4-cyclodiphosphate (ME-CPP) with a corresponding release of cytidine 5-monophosphate (CMP). The chain is 2-C-methyl-D-erythritol 2,4-cyclodiphosphate synthase from Bacillus subtilis (strain 168).